A 529-amino-acid polypeptide reads, in one-letter code: GMP synthase [glutamine-hydrolyzing] (529 aa).

In terms of domain architecture, Glutamine amidotransferase type-1 spans 16–205 (PVLVVDFGAQ…LHDFAGLDAD (190 aa)). The active-site Nucleophile is C93. Catalysis depends on residues H179 and E181. Residues 206 to 403 (WTAANIAGVL…LDLPEEIVAR (198 aa)) enclose the GMPS ATP-PPase domain. 233–239 (SGGVDSA) is a binding site for ATP.

Homodimer.

The catalysed reaction is XMP + L-glutamine + ATP + H2O = GMP + L-glutamate + AMP + diphosphate + 2 H(+). It participates in purine metabolism; GMP biosynthesis; GMP from XMP (L-Gln route): step 1/1. Its function is as follows. Catalyzes the synthesis of GMP from XMP. The chain is GMP synthase [glutamine-hydrolyzing] from Mycobacterium leprae (strain Br4923).